The primary structure comprises 423 residues: Galactosylceramide sulfotransferase (423 aa).

Topologically, residues Met-1–Lys-12 are cytoplasmic. The chain crosses the membrane as a helical; Signal-anchor for type II membrane protein span at residues Ala-13–Pro-35. Topologically, residues Pro-36–Trp-423 are lumenal. N-linked (GlcNAc...) asparagine glycosylation is found at Asn-66 and Asn-312.

The protein belongs to the galactose-3-O-sulfotransferase family. As to expression, expressed in brain, testis, kidney, stomach, small intestine, liver, and lung. Not detected in heart, skeletal muscle, and spleen.

It is found in the golgi apparatus membrane. The catalysed reaction is a beta-D-galactosyl-(1&lt;-&gt;1')-N-acylsphing-4-enine + 3'-phosphoadenylyl sulfate = an N-acyl-1-beta-D-(3-O-sulfo)-galactosyl-sphing-4-enine + adenosine 3',5'-bisphosphate + H(+). The enzyme catalyses a 1-O-alkyl-2-acyl-3-O-(beta-D-galactosyl)-sn-glycerol + 3'-phosphoadenylyl sulfate = a 1-O-alkyl-2-acyl-3-(beta-D-3-sulfogalactosyl)-sn-glycerol + adenosine 3',5'-bisphosphate + H(+). It catalyses the reaction a beta-D-Gal-(1&lt;-&gt;1')-ceramide + 3'-phosphoadenylyl sulfate = 1-(3-O-sulfo-beta-D-galactosyl)-ceramide + adenosine 3',5'-bisphosphate + H(+). It carries out the reaction a 1,2-diacyl-3-O-(beta-D-galactosyl)-sn-glycerol + 3'-phosphoadenylyl sulfate = 1,2-diacyl-3-(3-O-sulfo-beta-D-galactosyl)-sn-glycerol + adenosine 3',5'-bisphosphate + H(+). The catalysed reaction is a beta-D-Gal-(1-&gt;4)-beta-D-Glc-(1&lt;-&gt;1)-Cer(d18:1(4E)) + 3'-phosphoadenylyl sulfate = beta-D-3-sulfogalactosyl-(1-&gt;4)-beta-D-glucosyl-(1&lt;-&gt;1')-N-acylsphing-4-enine + adenosine 3',5'-bisphosphate + H(+). The protein operates within lipid metabolism; sphingolipid metabolism. Its function is as follows. Catalyzes the transfer of a sulfate group to position 3 of non-reducing beta-galactosyl residues in glycerolipids and sphingolipids, therefore participates in the biosynthesis of sulfoglycolipids. Catalyzes the synthesis of galactosylceramide sulfate (sulfatide), a major lipid component of the myelin sheath and of monogalactosylalkylacylglycerol sulfate (seminolipid), present in spermatocytes. Seems to prefer beta-glycosides at the non-reducing termini of sugar chains attached to a lipid moiety. Also acts on lactosylceramide, galactosyl 1-alkyl-2-sn-glycerol and galactosyl diacylglycerol (in vitro). This Mus musculus (Mouse) protein is Galactosylceramide sulfotransferase.